Reading from the N-terminus, the 541-residue chain is Phosphoenolpyruvate carboxykinase (ATP) (541 aa).

Substrate contacts are provided by Arg-67, Tyr-207, and Lys-213. Residues Lys-213, His-232, and 248–256 (GLSGTGKTT) contribute to the ATP site. Positions 213 and 232 each coordinate Mn(2+). Asp-269 lines the Mn(2+) pocket. ATP contacts are provided by residues Glu-297, Arg-333, 449 to 450 (RI), and Thr-455. Substrate is bound at residue Arg-333.

Belongs to the phosphoenolpyruvate carboxykinase (ATP) family. As to quaternary structure, monomer. Mn(2+) is required as a cofactor.

The protein resides in the cytoplasm. The enzyme catalyses oxaloacetate + ATP = phosphoenolpyruvate + ADP + CO2. The protein operates within carbohydrate biosynthesis; gluconeogenesis. Its function is as follows. Involved in the gluconeogenesis. Catalyzes the conversion of oxaloacetate (OAA) to phosphoenolpyruvate (PEP) through direct phosphoryl transfer between the nucleoside triphosphate and OAA. In Vibrio atlanticus (strain LGP32) (Vibrio splendidus (strain Mel32)), this protein is Phosphoenolpyruvate carboxykinase (ATP).